A 520-amino-acid polypeptide reads, in one-letter code: 2-methylcitrate dehydratase, mitochondrial (520 aa).

The transit peptide at 1 to 37 (MRAFRSAANFGAASNIYRKSFTPASIASNRFVSARMS) directs the protein to the mitochondrion.

Belongs to the PrpD family. In terms of assembly, monomer.

It localises to the mitochondrion. The catalysed reaction is (2S,3S)-2-methylcitrate = 2-methyl-cis-aconitate + H2O. The protein operates within organic acid metabolism; propanoate degradation. Its activity is regulated as follows. Several bivalent metal ions, such as nickel, copper, zinc, mercury, and lead, inhibit the activity to some extent. Inhibited by structural analogs such as citrate, cis-aconitate, isocitrate, 2-methylisocitrate, tricarballylate and fluorocitrate, but not by trans-aconitate or adipate. In terms of biological role, component of the methylcitrate cycle that catalyzes the dehydration of 2-methylcitrate to 2-methyl-cis-aconitate. The methylcitrate cycle is a metabolic pathway for the consumption of propionic acid. The chain is 2-methylcitrate dehydratase, mitochondrial from Yarrowia lipolytica (strain CLIB 122 / E 150) (Yeast).